We begin with the raw amino-acid sequence, 143 residues long: MLQPKRTKFRKAHKGRIHGNAPGGASLNFGAFGLKALEPDRITARQIEAARRAITRHIKRQGRLWIRIFPDVPVSSKPAEVRMGSGKGSPEFWAARVKPGRILFELDGVPGPLARVAFERAMEKLPIKTKVVARFGESIYEDK.

The span at 1–17 (MLQPKRTKFRKAHKGRI) shows a compositional bias: basic residues. Positions 1–21 (MLQPKRTKFRKAHKGRIHGNA) are disordered.

This sequence belongs to the universal ribosomal protein uL16 family. Part of the 50S ribosomal subunit.

Functionally, binds 23S rRNA and is also seen to make contacts with the A and possibly P site tRNAs. In Rhizorhabdus wittichii (strain DSM 6014 / CCUG 31198 / JCM 15750 / NBRC 105917 / EY 4224 / RW1) (Sphingomonas wittichii), this protein is Large ribosomal subunit protein uL16.